The chain runs to 126 residues: Holo-[acyl-carrier-protein] synthase (126 aa).

Positions 9 and 58 each coordinate Mg(2+).

The protein belongs to the P-Pant transferase superfamily. AcpS family. It depends on Mg(2+) as a cofactor.

The protein localises to the cytoplasm. The enzyme catalyses apo-[ACP] + CoA = holo-[ACP] + adenosine 3',5'-bisphosphate + H(+). In terms of biological role, transfers the 4'-phosphopantetheine moiety from coenzyme A to a Ser of acyl-carrier-protein. The chain is Holo-[acyl-carrier-protein] synthase from Escherichia coli (strain ATCC 8739 / DSM 1576 / NBRC 3972 / NCIMB 8545 / WDCM 00012 / Crooks).